A 363-amino-acid chain; its full sequence is S-adenosylmethionine:tRNA ribosyltransferase-isomerase (363 aa).

This sequence belongs to the QueA family. Monomer.

It localises to the cytoplasm. It catalyses the reaction 7-aminomethyl-7-carbaguanosine(34) in tRNA + S-adenosyl-L-methionine = epoxyqueuosine(34) in tRNA + adenine + L-methionine + 2 H(+). It functions in the pathway tRNA modification; tRNA-queuosine biosynthesis. Functionally, transfers and isomerizes the ribose moiety from AdoMet to the 7-aminomethyl group of 7-deazaguanine (preQ1-tRNA) to give epoxyqueuosine (oQ-tRNA). The protein is S-adenosylmethionine:tRNA ribosyltransferase-isomerase of Pasteurella multocida (strain Pm70).